We begin with the raw amino-acid sequence, 885 residues long: High affinity cAMP-specific and IBMX-insensitive 3',5'-cyclic phosphodiesterase 8B (885 aa).

Disordered stretches follow at residues 18 to 41 (RDSDESSSPRQTTSVSQGPAAPLP) and 72 to 95 (TELGSGSSAGSAAPAATTSRGRRR). The span at 23-34 (SSSPRQTTSVSQ) shows a compositional bias: polar residues. The segment covering 75 to 90 (GSGSSAGSAAPAATTS) has biased composition (low complexity). The PAS domain maps to 267 to 338 (ACNSVFTALD…DTINTCIKKG (72 aa)). The interval 393–436 (IHRDSGDNSQTEPHSFRYKNRRKESIDVKSISSRGSDAPSLQNR) is disordered. Polar residues predominate over residues 422–436 (SISSRGSDAPSLQNR). Ser517 bears the Phosphoserine mark. The 337-residue stretch at 539 to 875 (TINDVPPCIS…KHWKTLDDLK (337 aa)) folds into the PDEase domain. His615 serves as the catalytic Proton donor. Residues His619, His655, and Asp656 each coordinate a divalent metal cation. The residue at position 754 (Ser754) is a Phosphoserine. Asp781 lines the a divalent metal cation pocket.

Belongs to the cyclic nucleotide phosphodiesterase family. PDE8 subfamily. A divalent metal cation serves as cofactor. As to expression, abundantly expressed in the thyroid. Also very weakly expressed in brain, spinal cord and placenta. In the thyroid isoform 1 predominates, and isoforms 2 and 6 are also highly expressed. In the placenta isoforms 1 and 2 are expressed equally. In the brain isoform 2 predominates.

The catalysed reaction is 3',5'-cyclic AMP + H2O = AMP + H(+). The protein operates within purine metabolism; 3',5'-cyclic AMP degradation; AMP from 3',5'-cyclic AMP: step 1/1. With respect to regulation, inhibited by dipyridimole. Insensitive to selective PDE inhibitors including rolipram and milrinone as well as to the non-selective inhibitor, IBMX. Unaffected by cGMP. Functionally, hydrolyzes the second messenger cAMP, which is a key regulator of many important physiological processes. May be involved in specific signaling in the thyroid gland. In Homo sapiens (Human), this protein is High affinity cAMP-specific and IBMX-insensitive 3',5'-cyclic phosphodiesterase 8B (PDE8B).